Consider the following 155-residue polypeptide: Interleukin-36 receptor antagonist protein (155 aa).

The cysteines at positions 8 and 154 are disulfide-linked.

This sequence belongs to the IL-1 family. In terms of assembly, interacts with cargo receptor TMED10; the interaction mediates the translocation from the cytoplasm into the ERGIC (endoplasmic reticulum-Golgi intermediate compartment) and thereby secretion. Predominantly expressed in skin keratinocytes but not in fibroblasts, endothelial cells or melanocytes. Detected also in the spleen, brain leukocyte and macrophage cell types. Increased in lesional psoriasis skin.

It is found in the cytoplasm. It localises to the secreted. In terms of biological role, inhibits the activity of interleukin-36 (IL36A,IL36B and IL36G) by binding to receptor IL1RL2 and preventing its association with the coreceptor IL1RAP for signaling. Part of the IL-36 signaling system that is thought to be present in epithelial barriers and to take part in local inflammatory response; similar to the IL-1 system with which it shares the coreceptor. Proposed to play a role in skin inflammation. May be involved in the innate immune response to fungal pathogens, such as Aspergillus fumigatus. May activate an anti-inflammatory signaling pathway by recruiting SIGIRR. The sequence is that of Interleukin-36 receptor antagonist protein from Homo sapiens (Human).